Reading from the N-terminus, the 360-residue chain is Photosystem II protein D1 (360 aa).

A run of 3 helical transmembrane segments spans residues 32–49 (YLGWFGCLMVPTLVSATF), 121–136 (HFFIGVCSYLGREWEL), and 145–159 (WIFVAFSAPVAAASA). Chlorophyll a is bound at residue His-121. Tyr-129 is a binding site for pheophytin a. 2 residues coordinate [CaMn4O5] cluster: Asp-173 and Glu-192. Residues 200-221 (LHMFGVAAVFGGSLFSAMHGSL) traverse the membrane as a helical segment. Residue His-201 coordinates chlorophyll a. Residues His-218 and 267–268 (SF) each bind a quinone. His-218 is a binding site for Fe cation. Residue His-275 participates in Fe cation binding. A helical transmembrane segment spans residues 277–291 (FLGAWPVVGIWLTAM). 4 residues coordinate [CaMn4O5] cluster: His-335, Glu-336, Asp-345, and Ala-347. A propeptide spanning residues 348 to 360 (CANCLLSLWPMVG) is cleaved from the precursor.

The protein belongs to the reaction center PufL/M/PsbA/D family. In terms of assembly, PSII is composed of 1 copy each of membrane proteins PsbA, PsbB, PsbC, PsbD, PsbE, PsbF, PsbH, PsbI, PsbJ, PsbK, PsbL, PsbM, PsbT, PsbX, PsbY, PsbZ, Psb30/Ycf12, at least 3 peripheral proteins of the oxygen-evolving complex and a large number of cofactors. It forms dimeric complexes. It depends on The D1/D2 heterodimer binds P680, chlorophylls that are the primary electron donor of PSII, and subsequent electron acceptors. It shares a non-heme iron and each subunit binds pheophytin, quinone, additional chlorophylls, carotenoids and lipids. D1 provides most of the ligands for the Mn4-Ca-O5 cluster of the oxygen-evolving complex (OEC). There is also a Cl(-1) ion associated with D1 and D2, which is required for oxygen evolution. The PSII complex binds additional chlorophylls, carotenoids and specific lipids. as a cofactor. In terms of processing, tyr-164 forms a radical intermediate that is referred to as redox-active TyrZ, YZ or Y-Z. Post-translationally, C-terminally processed by CtpA; processing is essential to allow assembly of the oxygen-evolving complex and thus photosynthetic growth.

It localises to the plastid. It is found in the chloroplast thylakoid membrane. It catalyses the reaction 2 a plastoquinone + 4 hnu + 2 H2O = 2 a plastoquinol + O2. Photosystem II (PSII) is a light-driven water:plastoquinone oxidoreductase that uses light energy to abstract electrons from H(2)O, generating O(2) and a proton gradient subsequently used for ATP formation. It consists of a core antenna complex that captures photons, and an electron transfer chain that converts photonic excitation into a charge separation. The D1/D2 (PsbA/PsbD) reaction center heterodimer binds P680, the primary electron donor of PSII as well as several subsequent electron acceptors. The chain is Photosystem II protein D1 from Karenia mikimotoi (Red tide dinoflagellate).